A 371-amino-acid polypeptide reads, in one-letter code: Probable dual-specificity RNA methyltransferase RlmN (371 aa).

Glutamate 114 serves as the catalytic Proton acceptor. Residues 120 to 346 (DGPRRSICVS…ESAGVNVNFR (227 aa)) enclose the Radical SAM core domain. Cysteine 127 and cysteine 357 are disulfide-bonded. Cysteine 134, cysteine 138, and cysteine 141 together coordinate [4Fe-4S] cluster. S-adenosyl-L-methionine is bound by residues 183-184 (GE), serine 215, 238-240 (SLH), and asparagine 314. Cysteine 357 acts as the S-methylcysteine intermediate in catalysis.

The protein belongs to the radical SAM superfamily. RlmN family. It depends on [4Fe-4S] cluster as a cofactor.

It localises to the cytoplasm. It catalyses the reaction adenosine(2503) in 23S rRNA + 2 reduced [2Fe-2S]-[ferredoxin] + 2 S-adenosyl-L-methionine = 2-methyladenosine(2503) in 23S rRNA + 5'-deoxyadenosine + L-methionine + 2 oxidized [2Fe-2S]-[ferredoxin] + S-adenosyl-L-homocysteine. The catalysed reaction is adenosine(37) in tRNA + 2 reduced [2Fe-2S]-[ferredoxin] + 2 S-adenosyl-L-methionine = 2-methyladenosine(37) in tRNA + 5'-deoxyadenosine + L-methionine + 2 oxidized [2Fe-2S]-[ferredoxin] + S-adenosyl-L-homocysteine. Specifically methylates position 2 of adenine 2503 in 23S rRNA and position 2 of adenine 37 in tRNAs. This Rhodopirellula baltica (strain DSM 10527 / NCIMB 13988 / SH1) protein is Probable dual-specificity RNA methyltransferase RlmN.